Here is a 398-residue protein sequence, read N- to C-terminus: MAIRYIDEIESLKGKKVFIRVDFNVPLDEHQNITEDTRIRAVLPTINFALDAGAKVILASHLGRPKGERKPKYSMAPAAKRLSRLLNKEVQLAPDCIGDEVKKMIDAMKPGEVLLLENVRFYEGEEKNDADFAKALANDCEIYINDAFAVSHRAHASVEAITKFFPVVAAGFLMNNEINYFEKAMQKPIRPLVAILGGAKVSGKLEVLESLVNKVDKIIIGGGMAFTFLKALGYNVGKSLVEEELLEIALTTYTKAREKGVKFYLPVDCVAADRFNPEAETKVTTIQEIPEEWMALDIGPATVTLFTEALQNAKTIIWNGPMGVFEMDAFSRGTFAMVSAVANSYALTIVGGGDTDSAVHRAGEYAKISYISTGGGAFLELLEGKHLPGIKVLEENGK.

Substrate contacts are provided by residues 22–24, Arg38, 61–64, Arg120, and Arg153; these read DFN and HLGR. ATP contacts are provided by residues Lys204, Glu326, and 352–355; that span reads GGDT.

The protein belongs to the phosphoglycerate kinase family. Monomer.

Its subcellular location is the cytoplasm. It carries out the reaction (2R)-3-phosphoglycerate + ATP = (2R)-3-phospho-glyceroyl phosphate + ADP. It functions in the pathway carbohydrate degradation; glycolysis; pyruvate from D-glyceraldehyde 3-phosphate: step 2/5. The polypeptide is Phosphoglycerate kinase (Geobacter metallireducens (strain ATCC 53774 / DSM 7210 / GS-15)).